The following is a 317-amino-acid chain: MKNNGGTRVVVIGTGFVGASYAFALMNQGIADEIVLIDANESKAIGDAMDFNHGKVFAPKPADIWHGDYDDCRDADLVVICAGANQKPGETRLDLVDKNIAIFRSIVESVMASGFQGLFLVATNPVDILTYATWKFSGLPHERVIGSGTILDTARFRFLLGEYFSVAPQNVHAYIIGEHGDTELPVWSQADIGGVPIRKLVESKGEEAQKELERIFVNVRDAAYQIIEKKGATYYGIAMGLARVTRAILHNENAILTVSAYLDGPYGERDVYIGVPAVINRNGIREVIEIELNDDEKNRFHHSAATLKSVLARFFTR.

Residues valine 17, aspartate 38, lysine 43, tyrosine 69, and 83-84 contribute to the NAD(+) site; that span reads GA. Positions 86 and 92 each coordinate substrate. Residues serine 105, 122–124, and serine 147 each bind NAD(+); that span reads ATN. 124–127 contacts substrate; it reads NPVD. 152–155 lines the substrate pocket; the sequence is DTAR. Beta-D-fructose 1,6-bisphosphate contacts are provided by arginine 157 and histidine 172. Histidine 179 serves as the catalytic Proton acceptor. Tyrosine 224 bears the Phosphotyrosine mark. Position 233 (threonine 233) interacts with substrate.

This sequence belongs to the LDH/MDH superfamily. LDH family. In terms of assembly, homotetramer.

The protein localises to the cytoplasm. The catalysed reaction is (S)-lactate + NAD(+) = pyruvate + NADH + H(+). It participates in fermentation; pyruvate fermentation to lactate; (S)-lactate from pyruvate: step 1/1. Its activity is regulated as follows. Allosterically activated by fructose 1,6-bisphosphate (FBP). Functionally, catalyzes the conversion of lactate to pyruvate. The polypeptide is L-lactate dehydrogenase (Bacillus caldolyticus).